Reading from the N-terminus, the 573-residue chain is DEAD-box ATP-dependent RNA helicase 47B (573 aa).

Residues 131–159 (KSFEELGLPPLLIDRLNKEGLSTPTEVQS) carry the Q motif motif. A Helicase ATP-binding domain is found at 162–362 (IPIISQKHDA…RSWGHDPVLV (201 aa)). 175–182 (SYTGSGKT) is an ATP binding site. Positions 293 to 296 (DEVD) match the DEAD box motif. The region spanning 421–565 (TLRRCIHALE…PCEFTEGKLL (145 aa)) is the Helicase C-terminal domain.

The protein belongs to the DEAD box helicase family.

The catalysed reaction is ATP + H2O = ADP + phosphate + H(+). This Oryza sativa subsp. japonica (Rice) protein is DEAD-box ATP-dependent RNA helicase 47B.